Here is a 309-residue protein sequence, read N- to C-terminus: Olfactory receptor 1A1 (309 aa).

The Extracellular portion of the chain corresponds to 1 to 25; it reads MRENNQSSTLEFILLGVTGQQEQED. Asparagine 5 carries N-linked (GlcNAc...) asparagine glycosylation. Residues 26–49 form a helical membrane-spanning segment; it reads FFYILFLFIYPITLIGNLLIVLAI. The Cytoplasmic portion of the chain corresponds to 50-57; that stretch reads CSDVRLHN. Residues 58 to 79 traverse the membrane as a helical segment; it reads PMYFLLANLSLVDIFFSSVTIP. The Extracellular portion of the chain corresponds to 80-100; sequence KMLANHLLGSKSISFGGCLTQ. An intrachain disulfide couples cysteine 97 to cysteine 189. A helical membrane pass occupies residues 101–120; that stretch reads MYFMIALGNTDSYILAAMAY. Topologically, residues 121-139 are cytoplasmic; that stretch reads DRAVAISRPLHYTTIMSPR. Residues 140 to 158 form a helical membrane-spanning segment; the sequence is SCIWLIAGSWVIGNANALP. Topologically, residues 159–195 are extracellular; the sequence is HTLLTASLSFCGNQEVANFYCDITPLLKLSCSDIHFH. A helical transmembrane segment spans residues 196–218; sequence VKMMYLGVGIFSVPLLCIIVSYI. Residues 219-235 are Cytoplasmic-facing; it reads RVFSTVFQVPSTKGVLK. A helical membrane pass occupies residues 236-258; the sequence is AFSTCGSHLTVVSLYYGTVMGTY. Residues 259–270 are Extracellular-facing; that stretch reads FRPLTNYSLKDA. Asparagine 264 carries N-linked (GlcNAc...) asparagine glycosylation. Residues 271–290 form a helical membrane-spanning segment; the sequence is VITVMYTAVTPMLNPFIYSL. At 291–309 the chain is on the cytoplasmic side; that stretch reads RNRDMKAALRKLFNKRISS.

Belongs to the G-protein coupled receptor 1 family.

It is found in the cell membrane. In terms of biological role, odorant receptor. This is Olfactory receptor 1A1 (OR1A1) from Homo sapiens (Human).